The following is a 37-amino-acid chain: Large ribosomal subunit protein bL36 (37 aa).

This sequence belongs to the bacterial ribosomal protein bL36 family.

This Natranaerobius thermophilus (strain ATCC BAA-1301 / DSM 18059 / JW/NM-WN-LF) protein is Large ribosomal subunit protein bL36.